Consider the following 158-residue polypeptide: MQNIKVNRGAILRSVEQAHIKQDHPDFQPGDTVRVETKVVEGNRTRNQAFEGVVIAINGTGSRKSFTVRKISFGEGVERVFPFSSPLVAKVTVLERGKVRRAKLYYLRELRGKAARIKSDRSRVMKDAARAQQARDAAQGNSSSETQSSTAAVETQGE.

The segment covering 119 to 129 has biased composition (basic and acidic residues); the sequence is SDRSRVMKDAA. The disordered stretch occupies residues 119-158; sequence SDRSRVMKDAARAQQARDAAQGNSSSETQSSTAAVETQGE. Residues 130 to 139 show a composition bias toward low complexity; that stretch reads RAQQARDAAQ. Residues 140-158 show a composition bias toward polar residues; sequence GNSSSETQSSTAAVETQGE.

It belongs to the bacterial ribosomal protein bL19 family.

Its function is as follows. This protein is located at the 30S-50S ribosomal subunit interface and may play a role in the structure and function of the aminoacyl-tRNA binding site. This Deinococcus geothermalis (strain DSM 11300 / CIP 105573 / AG-3a) protein is Large ribosomal subunit protein bL19.